Consider the following 372-residue polypeptide: Probable leucine aminopeptidase MCYG_03459 (372 aa).

An N-terminal signal peptide occupies residues 1–18 (MKISTLAVVSAFAVTAIA). An N-linked (GlcNAc...) asparagine glycan is attached at Asn-95. Zn(2+) contacts are provided by His-175 and Asp-194. Residues Asn-195 and Asn-219 are each glycosylated (N-linked (GlcNAc...) asparagine). Positions 233 and 260 each coordinate Zn(2+). Cys-305 and Cys-309 form a disulfide bridge. A Zn(2+)-binding site is contributed by His-338.

It belongs to the peptidase M28 family. M28E subfamily. Monomer. Zn(2+) is required as a cofactor.

It localises to the secreted. Functionally, probable extracellular aminopeptidase which contributes to pathogenicity. This is Probable leucine aminopeptidase MCYG_03459 from Arthroderma otae (strain ATCC MYA-4605 / CBS 113480) (Microsporum canis).